Here is a 257-residue protein sequence, read N- to C-terminus: AA9 family lytic polysaccharide monooxygenase U (257 aa).

The N-terminal stretch at 1–19 (MKLYLAAFLGAVATPGAFA) is a signal peptide. His-20 contacts Cu(2+). Residues Asn-29 and Asn-71 are each glycosylated (N-linked (GlcNAc...) asparagine). Cys-74 and Cys-194 form a disulfide bridge. Residue His-113 participates in Cu(2+) binding. A glycan (N-linked (GlcNAc...) asparagine) is linked at Asn-161. Gln-189 is a binding site for O2. Residue Tyr-191 participates in Cu(2+) binding.

This sequence belongs to the polysaccharide monooxygenase AA9 family. Requires Cu(2+) as cofactor.

It localises to the secreted. The catalysed reaction is [(1-&gt;4)-beta-D-glucosyl]n+m + reduced acceptor + O2 = 4-dehydro-beta-D-glucosyl-[(1-&gt;4)-beta-D-glucosyl]n-1 + [(1-&gt;4)-beta-D-glucosyl]m + acceptor + H2O.. In terms of biological role, lytic polysaccharide monooxygenase (LPMO) that depolymerizes crystalline and amorphous polysaccharides via the oxidation of scissile alpha- or beta-(1-4)-glycosidic bonds, yielding C1 and C4 oxidation products. Catalysis by LPMOs requires the reduction of the active-site copper from Cu(II) to Cu(I) by a reducing agent and H(2)O(2) or O(2) as a cosubstrate. Shows no activity on wheat arabinoxylan, konjac glucomannan, acetylated spruce galactoglucomannan, or cellopentaose. In Thermothielavioides terrestris (strain ATCC 38088 / NRRL 8126) (Thielavia terrestris), this protein is AA9 family lytic polysaccharide monooxygenase U.